Reading from the N-terminus, the 122-residue chain is UPF0102 protein CPE1705 (122 aa).

Belongs to the UPF0102 family.

In Clostridium perfringens (strain 13 / Type A), this protein is UPF0102 protein CPE1705.